An 89-amino-acid polypeptide reads, in one-letter code: Bombyxin B-1 (89 aa).

A signal peptide spans 1-19 (MKTSVMFMLVIVISLMCSG). 3 disulfides stabilise this stretch: cysteine 29–cysteine 75, cysteine 41–cysteine 88, and cysteine 74–cysteine 79. The propeptide at 48–66 (GGAQYAPYFWTRQYLGSRG) is c peptide like.

It belongs to the insulin family. As to quaternary structure, heterodimer of a B chain and an A chain linked by two disulfide bonds.

It is found in the secreted. In terms of biological role, brain peptide responsible for activation of prothoracic glands to produce ecdysone in insects. The protein is Bombyxin B-1 (BBXB1) of Bombyx mori (Silk moth).